The sequence spans 286 residues: MAVVTMRQLLDAGVHFGHQTRRWNPKMKRYIITERNGIYIIDLQQTLTYIDSAYEFVKETVAHGGNILFVGTKKQAQEAVATEAERVGMPYVNHRWLGGMLTNFQTVHKRLGRLKELQAMDAAENGYEGRTKKEVLMLTRERQKLERVLGGISDMNKVPSAIWIVDTNKEHIAVSEAQKLNIPVVAILDTNCDPDVVDYPIPGNDDAIRSAALLTGVIASAVEDGKKARAERAQAEAKAAAGDNDAPVSSEGESTEVASDAASTASETTATSSDESAAESSEAESK.

A disordered region spans residues 231–286; that stretch reads ERAQAEAKAAAGDNDAPVSSEGESTEVASDAASTASETTATSSDESAAESSEAESK. Low complexity predominate over residues 255–280; the sequence is TEVASDAASTASETTATSSDESAAES.

It belongs to the universal ribosomal protein uS2 family.

This Corynebacterium kroppenstedtii (strain DSM 44385 / JCM 11950 / CIP 105744 / CCUG 35717) protein is Small ribosomal subunit protein uS2.